We begin with the raw amino-acid sequence, 293 residues long: Immediate early response gene 5-like protein (293 aa).

Belongs to the IER family.

This chain is Immediate early response gene 5-like protein (ier5l), found in Xenopus laevis (African clawed frog).